Consider the following 478-residue polypeptide: WD repeat-containing protein AAC3 (478 aa).

Disordered regions lie at residues 33–53 (HPLF…QQQQ) and 106–140 (SQIH…QYTN). Over residues 106 to 125 (SQIHQQSQQSQLSNNLNSNS) the composition is skewed to low complexity. Over residues 126 to 140 (KESTNIPKTNTQYTN) the composition is skewed to polar residues. 7 WD repeats span residues 163 to 202 (GNKK…NSNN), 226 to 268 (GHDG…GTVS), 270 to 307 (NSEN…TLKI), 310 to 349 (FNGE…TTHV), 357 to 396 (GHTA…CVKT), 399 to 438 (KSTF…PIHT), and 440 to 478 (ECSG…GYHS).

Belongs to the THOC3 family.

This Dictyostelium discoideum (Social amoeba) protein is WD repeat-containing protein AAC3 (AAC3).